Here is a 1436-residue protein sequence, read N- to C-terminus: tRNA (guanosine(18)-2'-O)-methyltransferase (1436 aa).

Residues 1365–1367 (LEQ), Gly1389, and 1409–1418 (IQQFGVIRSM) contribute to the S-adenosyl-L-methionine site.

Belongs to the class IV-like SAM-binding methyltransferase superfamily. RNA methyltransferase TrmH family.

The protein localises to the cytoplasm. It carries out the reaction guanosine(18) in tRNA + S-adenosyl-L-methionine = 2'-O-methylguanosine(18) in tRNA + S-adenosyl-L-homocysteine + H(+). Functionally, S-adenosyl-L-methionine-dependent 2'-O-ribose methyltransferase that catalyzes the formation of 2'-O-methylguanosine at position 18 (Gm18) in various tRNAs. The polypeptide is tRNA (guanosine(18)-2'-O)-methyltransferase (Saccharomyces cerevisiae (strain ATCC 204508 / S288c) (Baker's yeast)).